A 741-amino-acid polypeptide reads, in one-letter code: Mitofusin-1 (741 aa).

Residues 1-584 (MAETVSPLKH…AAQEELMITL (584 aa)) are Cytoplasmic-facing. A part of a helix bundle domain, formed by helices from N-terminal and C-terminal regions region spans residues 9–73 (KHFVLAKKAI…LAVIGEVLSR (65 aa)). The 250-residue stretch at 72 to 321 (SRRHMKVAFF…ARLQEFQNFE (250 aa)) folds into the Dynamin-type G domain. Positions 82–89 (GRTSSGKS) are G1 motif. Position 85-90 (85-90 (SSGKSS)) interacts with GTP. The G2 motif stretch occupies residues 108-109 (TT). The tract at residues 178–181 (DSPG) is G3 motif. 237 to 240 (NRWD) is a GTP binding site. Positions 237–240 (NRWD) are G4 motif. Glu266 is a region of interest (G5 motif). GTP is bound by residues Ser284 and Lys286. The interval 338–364 (EQHTIRAKQILDTVKNILDSVNVAAAE) is part of a helix bundle domain, formed by helices from N-terminal and C-terminal regions. The stretch at 371-408 (EEREDQIDRLDFIRNQMNLLTLDVKKKIKEVTEEVANK) forms a coiled coil. A helical membrane pass occupies residues 585–605 (ITGLASLTSRTSMGIIVVGGV). Over 606–608 (IWK) the chain is Mitochondrial intermembrane. Residues 609–629 (TVGWKLISVTLSMYGALYLYE) form a helical membrane-spanning segment. At 630-741 (RLTWTTRAKE…QFLHPSSGES (112 aa)) the chain is on the cytoplasmic side. Positions 677–735 (FARLCQQVDVTQKHLEEEIARLSKEIDQLEKIQNNSKLLRNKAVQLESELENFSKQFLH) form a coiled coil. The segment at 703–734 (DQLEKIQNNSKLLRNKAVQLESELENFSKQFL) is part of a helix bundle domain, formed by helices from N-terminal and C-terminal regions.

The protein belongs to the TRAFAC class dynamin-like GTPase superfamily. Dynamin/Fzo/YdjA family. Mitofusin subfamily. As to quaternary structure, homodimer, also in the absence of bound GTP. Forms higher oligomers in the presence of a transition state GTP analog. Forms homomultimers and heteromultimers with MFN2. Oligomerization is essential for mitochondrion fusion. Component of a high molecular weight multiprotein complex. Interacts with VAT1. Interacts with THG1L; THG1L probably functions as a guanyl-nucleotide exchange factor/GEF, activating MFN1. In terms of processing, ubiquitinated by MARCHF5. When mitochondria are depolarized and dysfunctional, it is ubiquitinated by a SCF (SKP1-CUL1-F-box protein) E3 ubiquitin-protein ligase complex that contains FBXO7 and PRKN. Ubiquitinated by non-degradative ubiquitin by PRKN, promoting mitochondrial fusion; deubiquitination by USP30 inhibits mitochondrial fusion. Detected in adult heart. Detected in embryos (at protein level). Widely expressed.

The protein resides in the mitochondrion outer membrane. It carries out the reaction GTP + H2O = GDP + phosphate + H(+). Its function is as follows. Mitochondrial outer membrane GTPase that mediates mitochondrial clustering and fusion. Membrane clustering requires GTPase activity. It may involve a major rearrangement of the coiled coil domains. Mitochondria are highly dynamic organelles, and their morphology is determined by the equilibrium between mitochondrial fusion and fission events. Overexpression induces the formation of mitochondrial networks (in vitro). Has low GTPase activity. This is Mitofusin-1 (Mfn1) from Mus musculus (Mouse).